The sequence spans 364 residues: DNA-(apurinic or apyrimidinic site) endonuclease (364 aa).

Composition is skewed to basic and acidic residues over residues 1 to 12 (MKRFFKPIEKEN) and 23 to 39 (PEKRDGDGDGVEEEKNQ). The disordered stretch occupies residues 1 to 42 (MKRFFKPIEKENSPAAKKPCLSPEKRDGDGDGVEEEKNQNEP). Glu80 is a Mg(2+) binding site. Tyr182 is an active-site residue. Residues Asp222, Asn224, and Asp342 each contribute to the Mg(2+) site. The active-site Proton donor/acceptor is Asp222.

Belongs to the DNA repair enzymes AP/exoA family. Interacts with ROS1. ROS1 is required for APE1L to stably associate with the DNA substrate. Requires Mg(2+) as cofactor. As to expression, expressed in leaves, flower buds and developing siliques. Not detected in roots.

Its subcellular location is the nucleus. It localises to the nucleolus. Apurinic/apyrimidinic (AP) endonuclease involved in active DNA demethylation and gene imprinting. According to a report, also displays an in vitro 3'-phosphatase activity. According to another report, has no in vitro 3'-phosphatase activity. Catalyzes the conversion of the 3'-blocking groups 3'-phosphor-alpha,beta-unsaturated aldehyde (3'-PUA) generated by ROS1 to 3'-OH. Has a strong non-specific affinity to DNA. Redundant with APE2 and at least one functional allele is required for seed viability. The chain is DNA-(apurinic or apyrimidinic site) endonuclease from Arabidopsis thaliana (Mouse-ear cress).